We begin with the raw amino-acid sequence, 335 residues long: DNA-directed RNA polymerase subunit alpha (335 aa).

The tract at residues 1-231 is alpha N-terminal domain (alpha-NTD); it reads MVREKVTVST…DLFIPFLHME (231 aa). An alpha C-terminal domain (alpha-CTD) region spans residues 262–335; sequence KKKLSLESIF…FALDLPKNLN (74 aa).

Belongs to the RNA polymerase alpha chain family. In plastids the minimal PEP RNA polymerase catalytic core is composed of four subunits: alpha, beta, beta', and beta''. When a (nuclear-encoded) sigma factor is associated with the core the holoenzyme is formed, which can initiate transcription.

The protein localises to the plastid. It carries out the reaction RNA(n) + a ribonucleoside 5'-triphosphate = RNA(n+1) + diphosphate. DNA-dependent RNA polymerase catalyzes the transcription of DNA into RNA using the four ribonucleoside triphosphates as substrates. The polypeptide is DNA-directed RNA polymerase subunit alpha (Cuscuta reflexa (Southern Asian dodder)).